Consider the following 162-residue polypeptide: Ribonuclease H (162 aa).

Residues 6 to 154 (DMKRVEIFTD…ADRLANQGVE (149 aa)) form the RNase H type-1 domain. Residues Asp15, Glu53, Asp82, and Asp146 each contribute to the Mg(2+) site.

The protein belongs to the RNase H family. In terms of assembly, monomer. Mg(2+) serves as cofactor.

The protein resides in the cytoplasm. It carries out the reaction Endonucleolytic cleavage to 5'-phosphomonoester.. Its function is as follows. Endonuclease that specifically degrades the RNA of RNA-DNA hybrids. In Nitrosomonas eutropha (strain DSM 101675 / C91 / Nm57), this protein is Ribonuclease H.